The sequence spans 227 residues: uncharacterized protein (227 aa).

It belongs to the flavoredoxin family. FMN serves as cofactor.

This is an uncharacterized protein from Deinococcus radiodurans (strain ATCC 13939 / DSM 20539 / JCM 16871 / CCUG 27074 / LMG 4051 / NBRC 15346 / NCIMB 9279 / VKM B-1422 / R1).